Consider the following 199-residue polypeptide: 7-methyl-GTP pyrophosphatase (199 aa).

D74 serves as the catalytic Proton acceptor.

This sequence belongs to the Maf family. YceF subfamily. A divalent metal cation is required as a cofactor.

It localises to the cytoplasm. The catalysed reaction is N(7)-methyl-GTP + H2O = N(7)-methyl-GMP + diphosphate + H(+). Its function is as follows. Nucleoside triphosphate pyrophosphatase that hydrolyzes 7-methyl-GTP (m(7)GTP). May have a dual role in cell division arrest and in preventing the incorporation of modified nucleotides into cellular nucleic acids. This is 7-methyl-GTP pyrophosphatase from Cupriavidus pinatubonensis (strain JMP 134 / LMG 1197) (Cupriavidus necator (strain JMP 134)).